Here is a 483-residue protein sequence, read N- to C-terminus: NADH-quinone oxidoreductase subunit N (483 aa).

13 helical membrane passes run 7–27, 33–53, 76–96, 108–128, 161–181, 196–216, 235–255, 272–292, 297–317, 323–343, 369–389, 402–422, and 442–462; these read AILT…LGAV, ALAS…AFYI, FAKI…QDYM, VLII…DLIA, FVLG…AYGF, GGDM…GLAF, PTPI…ALFA, IVAF…IGQT, LMAY…SAGT, AMLI…AFIL, ALAI…LGFF, GLVW…FYYI, and MGLV…LGWV.

Belongs to the complex I subunit 2 family. As to quaternary structure, NDH-1 is composed of 14 different subunits. Subunits NuoA, H, J, K, L, M, N constitute the membrane sector of the complex.

The protein localises to the cell inner membrane. The catalysed reaction is a quinone + NADH + 5 H(+)(in) = a quinol + NAD(+) + 4 H(+)(out). Functionally, NDH-1 shuttles electrons from NADH, via FMN and iron-sulfur (Fe-S) centers, to quinones in the respiratory chain. The immediate electron acceptor for the enzyme in this species is believed to be ubiquinone. Couples the redox reaction to proton translocation (for every two electrons transferred, four hydrogen ions are translocated across the cytoplasmic membrane), and thus conserves the redox energy in a proton gradient. The polypeptide is NADH-quinone oxidoreductase subunit N (Jannaschia sp. (strain CCS1)).